A 497-amino-acid chain; its full sequence is Serine hydroxymethyltransferase (497 aa).

Residues L176 and 180–182 (GHL) contribute to the (6S)-5,6,7,8-tetrahydrofolate site. K289 is subject to N6-(pyridoxal phosphate)lysine.

It belongs to the SHMT family. Homodimer. It depends on pyridoxal 5'-phosphate as a cofactor.

The protein resides in the cytoplasm. It catalyses the reaction (6R)-5,10-methylene-5,6,7,8-tetrahydrofolate + glycine + H2O = (6S)-5,6,7,8-tetrahydrofolate + L-serine. It functions in the pathway one-carbon metabolism; tetrahydrofolate interconversion. Its pathway is amino-acid biosynthesis; glycine biosynthesis; glycine from L-serine: step 1/1. Its function is as follows. Catalyzes the reversible interconversion of serine and glycine with tetrahydrofolate (THF) serving as the one-carbon carrier. This reaction serves as the major source of one-carbon groups required for the biosynthesis of purines, thymidylate, methionine, and other important biomolecules. Also exhibits THF-independent aldolase activity toward beta-hydroxyamino acids, producing glycine and aldehydes, via a retro-aldol mechanism. The chain is Serine hydroxymethyltransferase from Chlamydia caviae (strain ATCC VR-813 / DSM 19441 / 03DC25 / GPIC) (Chlamydophila caviae).